Reading from the N-terminus, the 300-residue chain is Junctional adhesion molecule A (300 aa).

The N-terminal stretch at 1 to 26 is a signal peptide; that stretch reads MGTEGKAGRKLLFLFTSMILGSLVQG. At 27–238 the chain is on the extracellular side; sequence KGSVYTAQSD…MDAVELNVGG (212 aa). 2 consecutive Ig-like V-type domains span residues 28 to 122 and 134 to 230; these read GSVY…GEVS and PTIS…AHMD. An N-linked (GlcNAc...) asparagine glycan is attached at Asn42. 2 cysteine pairs are disulfide-bonded: Cys49-Cys108 and Cys152-Cys212. Asn185 is a glycosylation site (N-linked (GlcNAc...) asparagine). A helical transmembrane segment spans residues 239 to 259; sequence IVAAVLVTLILLGLLIFGVWF. The Cytoplasmic portion of the chain corresponds to 260–299; the sequence is AYSRGYFERTKKGTAPGKKVIYSQPSTRSEGEFKQTSSFL. Phosphoserine is present on residues Ser282, Ser285, and Ser288.

It belongs to the immunoglobulin superfamily. Interacts with the ninth PDZ domain of MPDZ. Interacts with the first PDZ domain of PARD3. The association between PARD3 and PARD6B probably disrupts this interaction. Interacts with ITGAL (via I-domain). Interacts with CD151.

It localises to the cell junction. It is found in the tight junction. The protein resides in the cell membrane. Functionally, seems to play a role in epithelial tight junction formation. Appears early in primordial forms of cell junctions and recruits PARD3. The association of the PARD6-PARD3 complex may prevent the interaction of PARD3 with JAM1, thereby preventing tight junction assembly. Plays a role in regulating monocyte transmigration involved in integrity of epithelial barrier. Ligand for integrin alpha-L/beta-2 involved in memory T-cell and neutrophil transmigration. Involved in platelet activation. This Mus musculus (Mouse) protein is Junctional adhesion molecule A (F11r).